We begin with the raw amino-acid sequence, 116 residues long: Flagellar transcriptional regulator FlhD (116 aa).

The protein belongs to the FlhD family. As to quaternary structure, homodimer; disulfide-linked. Forms a heterohexamer composed of two FlhC and four FlhD subunits. Each FlhC binds a FlhD dimer, forming a heterotrimer, and a hexamer assembles by dimerization of two heterotrimers.

It is found in the cytoplasm. Functions in complex with FlhC as a master transcriptional regulator that regulates transcription of several flagellar and non-flagellar operons by binding to their promoter region. Activates expression of class 2 flagellar genes, including fliA, which is a flagellum-specific sigma factor that turns on the class 3 genes. Also regulates genes whose products function in a variety of physiological pathways. This is Flagellar transcriptional regulator FlhD from Proteus mirabilis (strain HI4320).